The chain runs to 74 residues: uncharacterized protein (74 aa).

Positions 55–74 are disordered; that stretch reads DENSESESKDGASWFKVYRG.

This is an uncharacterized protein from Listeria innocua serovar 6a (strain ATCC BAA-680 / CLIP 11262).